Reading from the N-terminus, the 411-residue chain is Carbohydrate sulfotransferase 1 (411 aa).

Topologically, residues 1-2 (MQ) are cytoplasmic. A helical; Signal-anchor for type II membrane protein transmembrane segment spans residues 3 to 23 (CSWKAVLLLALASIAIQYTAI). Residues 24 to 411 (RTFTAKSFHT…VEERDFRPFS (388 aa)) lie on the Lumenal side of the membrane. N-linked (GlcNAc...) asparagine glycosylation occurs at Asn56. 69–75 (TRSGSSF) is a 3'-phosphoadenylyl sulfate binding site. Asn145 and Asn189 each carry an N-linked (GlcNAc...) asparagine glycan. Position 234-242 (234-242 (RDPRGILAS)) interacts with 3'-phosphoadenylyl sulfate. Residue Asn334 is glycosylated (N-linked (GlcNAc...) asparagine). The Cell attachment site signature appears at 337-339 (RGD).

It belongs to the sulfotransferase 1 family. Gal/GlcNAc/GalNAc subfamily. In terms of tissue distribution, widely expressed at low level. Expressed in brain and skeletal muscle. Expressed by high endothelial cells (HEVs) and leukocytes.

It localises to the golgi apparatus membrane. It catalyses the reaction 3'-phosphoadenylyl sulfate + keratan = adenosine 3',5'-bisphosphate + keratan 6'-sulfate.. The protein operates within glycan metabolism. In terms of biological role, sulfotransferase that utilizes 3'-phospho-5'-adenylyl sulfate (PAPS) as sulfonate donor to catalyze the transfer of sulfate to position 6 of internal galactose (Gal) residues of keratan. Cooperates with B4GALT4 and B3GNT7 glycosyltransferases and CHST6 sulfotransferase to construct and elongate disulfated disaccharide unit [-&gt;3(6-sulfoGalbeta)1-&gt;4(6-sulfoGlcNAcbeta)1-&gt;] within keratan sulfate polymer. Has a preference for sulfating keratan sulfate, but it also transfers sulfate to the unsulfated polymer. Involved in biosynthesis of phosphacan, a major keratan sulfate proteoglycan in the developing brain. Involved in biosynthesis of 6-sulfoGalbeta-containing O-linked glycans in high endothelial venules of lymph nodes. May act in a synergistic manner with CHST4 to generate sialyl 6',6-disulfo Lewis X motif, a recognition determinant for immune cell receptors implicated in leukocyte trafficking. Catalyzes sulfation of N-acetyllactosamine (LacNAc) oligosaccharides with highest efficiency for sialylated LacNAc structures. This chain is Carbohydrate sulfotransferase 1, found in Homo sapiens (Human).